The following is a 490-amino-acid chain: Aspartyl/glutamyl-tRNA(Asn/Gln) amidotransferase subunit B (490 aa).

It belongs to the GatB/GatE family. GatB subfamily. Heterotrimer of A, B and C subunits.

It carries out the reaction L-glutamyl-tRNA(Gln) + L-glutamine + ATP + H2O = L-glutaminyl-tRNA(Gln) + L-glutamate + ADP + phosphate + H(+). The enzyme catalyses L-aspartyl-tRNA(Asn) + L-glutamine + ATP + H2O = L-asparaginyl-tRNA(Asn) + L-glutamate + ADP + phosphate + 2 H(+). Allows the formation of correctly charged Asn-tRNA(Asn) or Gln-tRNA(Gln) through the transamidation of misacylated Asp-tRNA(Asn) or Glu-tRNA(Gln) in organisms which lack either or both of asparaginyl-tRNA or glutaminyl-tRNA synthetases. The reaction takes place in the presence of glutamine and ATP through an activated phospho-Asp-tRNA(Asn) or phospho-Glu-tRNA(Gln). The chain is Aspartyl/glutamyl-tRNA(Asn/Gln) amidotransferase subunit B from Prochlorococcus marinus (strain MIT 9312).